A 152-amino-acid polypeptide reads, in one-letter code: Regulatory protein RecX (152 aa).

The protein belongs to the RecX family.

It localises to the cytoplasm. Functionally, modulates RecA activity. This chain is Regulatory protein RecX, found in Haemophilus influenzae (strain PittGG).